Reading from the N-terminus, the 129-residue chain is Glycine cleavage system H protein (129 aa).

Positions 24–106 (LLKIGVSEFA…IGDGWLVILK (83 aa)) constitute a Lipoyl-binding domain. Lysine 65 bears the N6-lipoyllysine mark.

This sequence belongs to the GcvH family. In terms of assembly, the glycine cleavage system is composed of four proteins: P, T, L and H. The cofactor is (R)-lipoate.

Its function is as follows. The glycine cleavage system catalyzes the degradation of glycine. The H protein shuttles the methylamine group of glycine from the P protein to the T protein. The chain is Glycine cleavage system H protein from Prochlorococcus marinus (strain MIT 9301).